Here is a 978-residue protein sequence, read N- to C-terminus: Receptor like protein 21 (978 aa).

Residues 1-27 (MLLAMEGKLFLCQYLIWVMLLLGQLHG) form the signal peptide. Residues 28-930 (CTSCIEKERE…EEDDKAAIDM (903 aa)) are Extracellular-facing. Asparagine 64, asparagine 79, asparagine 102, asparagine 116, and asparagine 155 each carry an N-linked (GlcNAc...) asparagine glycan. 28 LRR repeats span residues 141-167 (LRNLKIMDLSTNYFNYSTFPFLNAATS), 169-189 (TTLILTYNEMDGPFPIKGLKD), 190-213 (LTNLELLDLRANKLNGSMQELIHL), 214-237 (KKLKALDLSSNKFSSSMELQELQN), 238-262 (LINLEVLGLAQNHVDGPIPIEVFCK), 264-287 (KNLRDLDLKGNHFVGQIPLCLGSL), 288-310 (KKLRVLDLSSNQLSGDLPSSFSS), 312-335 (ESLEYLSLSDNNFDGSFSLNPLTN), 337-361 (TNLKLFKLSSRSHTIQVKMESTWQP), 362-385 (NFQLSVVVLRFCSLEKIPSFLLYQ), 386-409 (KKLRLVDLSSNNLSGNIPTWLLTN), 410-432 (NPELEVLQLQNNSFTIFPIPTMV), 433-455 (HNLQIFDFSANNIGKFPDKMDHA), 457-480 (PNLVRLNGSNNGFQGYFPTSIGEM), 481-504 (KNISFLDLSYNNFSGKLPRSFVTG), 506-529 (VSIMFLKLSHNKFSGRFLPRETNF), 530-553 (PSLDVLRMDNNLFTGNIGGGLSNS), 554-577 (TMLRILDMSNNGLSGAIPRWLFEF), 579-601 (YLDYVLISNNFLEGTIPPSLLGM), 602-625 (PFLSFLDLSGNQFSGALPSHVDSE), 627-646 (GIYMFLHNNNFTGPIPDTLL), 647-671 (KSVQILDLRNNKLSGSIPQFDDTQS), 673-693 (NILLLKGNNLTGSIPRELCDL), 694-716 (SNVRLLDLSDNKLNGVIPSCLSN), 788-811 (LRLMYGMDLSNNELSGVIPTELGD), 812-835 (LLKLRTLNLSHNSLLGSIPSSFSK), 837-859 (IDVESLDLSHNMLQGSIPQLLSS), and 860-885 (LTSLAVFDVSSNNLSGIIPQGRQFNT). A glycan (N-linked (GlcNAc...) asparagine) is linked at asparagine 204. Asparagine 335 is a glycosylation site (N-linked (GlcNAc...) asparagine). Residues asparagine 397 and asparagine 420 are each glycosylated (N-linked (GlcNAc...) asparagine). Asparagine 463, asparagine 482, and asparagine 492 each carry an N-linked (GlcNAc...) asparagine glycan. Asparagine 552 is a glycosylation site (N-linked (GlcNAc...) asparagine). A glycan (N-linked (GlcNAc...) asparagine) is linked at asparagine 636. N-linked (GlcNAc...) asparagine glycans are attached at residues asparagine 681 and asparagine 716. The N-linked (GlcNAc...) asparagine glycan is linked to asparagine 819. Asparagine 872 is a glycosylation site (N-linked (GlcNAc...) asparagine). Residues 902–922 (TSRSCETNKSPEEADNGQEEE) are disordered. The chain crosses the membrane as a helical span at residues 931 to 951 (MVFYFSTASIYVTALIGVLVL). The Cytoplasmic segment spans residues 952–978 (MCFDCPWRRAWLRIVDAFIASAKHVLP).

It belongs to the RLP family.

The protein resides in the cell membrane. The chain is Receptor like protein 21 from Arabidopsis thaliana (Mouse-ear cress).